The primary structure comprises 596 residues: Actin-histidine N-methyltransferase (596 aa).

The interval 1 to 22 is disordered; the sequence is MGKKSRVKTQKSGTGATATVSP. Residues 10 to 20 show a composition bias toward polar residues; it reads QKSGTGATATV. S-adenosyl-L-methionine-binding positions include Arg-75, 104-106, Arg-254, 275-279, and 325-327; these read EGF, DMCNH, and SGF. An SET domain is found at 94-314; sequence EGFEMVNFKE…AGDQIYIFYG (221 aa). The disordered stretch occupies residues 551–596; that stretch reads GLVNGESLIPNGTRSENESLSPEESENTTGDTEESSGSMDAVKERL. Positions 571-584 are enriched in acidic residues; the sequence is SPEESENTTGDTEE.

It belongs to the class V-like SAM-binding methyltransferase superfamily. SETD3 actin-histidine methyltransferase family. As to quaternary structure, interacts with MYOD1. Post-translationally, phosphorylated by GSK3B, which is required for recognition by the SCF(FBXW7) complex and subsequent degradation. Ubiquitinated by the SCF(FBXW7) complex following phosphorylation by GSK3B, leading to its degradation by the proteasome.

The protein resides in the cytoplasm. The protein localises to the nucleus. It carries out the reaction L-histidyl-[protein] + S-adenosyl-L-methionine = N(tele)-methyl-L-histidyl-[protein] + S-adenosyl-L-homocysteine + H(+). Protein-histidine N-methyltransferase that specifically mediates 3-methylhistidine (tele-methylhistidine) methylation of actin at 'His-73'. Histidine methylation of actin is required for smooth muscle contraction of the laboring uterus during delivery. Does not have protein-lysine N-methyltransferase activity and probably only catalyzes histidine methylation of actin. This Rattus norvegicus (Rat) protein is Actin-histidine N-methyltransferase.